The sequence spans 327 residues: 2-keto-3-deoxygluconate permease (327 aa).

The next 10 membrane-spanning stretches (helical) occupy residues 10–30 (IPGG…TFSP), 42–62 (GMIT…GASI), 73–93 (KSGT…AIAS), 95–115 (IIPE…LALV), 139–159 (AGAF…IILG), 163–183 (IASF…VGFA), 199–219 (VQTL…LTVI), 224–244 (LLGI…LIIA), 254–274 (TAGI…VLIA), and 289–309 (SLVA…TSIW).

Belongs to the KdgT transporter family.

It is found in the cell inner membrane. The enzyme catalyses 2-dehydro-3-deoxy-D-gluconate(in) + H(+)(in) = 2-dehydro-3-deoxy-D-gluconate(out) + H(+)(out). In terms of biological role, catalyzes the proton-dependent uptake of 2-keto-3-deoxygluconate (KDG) into the cell. The sequence is that of 2-keto-3-deoxygluconate permease from Escherichia coli O157:H7.